The chain runs to 334 residues: tRNA uridine(34) hydroxylase (334 aa).

The Rhodanese domain maps to 123–217 (SDPDVILVDT…YLEEVKAEES (95 aa)). C177 acts as the Cysteine persulfide intermediate in catalysis.

This sequence belongs to the TrhO family.

The enzyme catalyses uridine(34) in tRNA + AH2 + O2 = 5-hydroxyuridine(34) in tRNA + A + H2O. Catalyzes oxygen-dependent 5-hydroxyuridine (ho5U) modification at position 34 in tRNAs. The sequence is that of tRNA uridine(34) hydroxylase from Shewanella baltica (strain OS195).